The primary structure comprises 406 residues: Sprouty-related, EVH1 domain-containing protein 1 (406 aa).

The WH1 domain occupies 3–120 (GEQEPDDSYA…RGIRRAIEDL (118 aa)). Residues 124–154 (LPASCHGESETSEDGPQVNKEDHYSTHNNDH) are disordered. A compositionally biased stretch (basic and acidic residues) spans 142–154 (NKEDHYSTHNNDH). The region spanning 195–247 (PIRHVSFQDEDEIVRINPRDMIIRRYADYRHPDIFRNDVDREEPEDVTFFTKT) is the KBD domain. The 109-residue stretch at 296 to 404 (SCVYCQERFN…CGCCGGKHKA (109 aa)) folds into the SPR domain.

Palmitoylated by ZDHHC17/HIP14. Post-translationally, ubiquitinated. In terms of processing, phosphorylated on tyrosine.

The protein localises to the cell membrane. Functionally, tyrosine kinase substrate that inhibits growth-factor-mediated activation of MAP kinase. The chain is Sprouty-related, EVH1 domain-containing protein 1 (spred1) from Xenopus tropicalis (Western clawed frog).